The chain runs to 808 residues: Protein Ac66 (808 aa).

Over residues 132 to 141 (PFSTPPPTQP) the composition is skewed to pro residues. Residues 132–151 (PFSTPPPTQPPESNVAGVGG) form a disordered region.

Interacts with the putative E3 ligase IE0 and with viral ubiquitin/vUbi.

Its subcellular location is the host nucleus. It localises to the host cytoplasm. Its function is as follows. Plays an essential role in the efficient egress of nucleocapsids from the host nucleus to the cytoplasm. In Lepidoptera (butterflies and moths), this protein is Protein Ac66 (Ac66).